Reading from the N-terminus, the 670-residue chain is Solute carrier organic anion transporter family member 1A5 (670 aa).

Topologically, residues 1 to 20 are cytoplasmic; the sequence is MGETEKRIATHGVRCFSKIK. Residues 21–40 traverse the membrane as a helical segment; it reads MFLLALTCAYVSKSLSGIYM. The Extracellular segment spans residues 41 to 59; the sequence is NSMLTQIERQFDIPTSIVG. A helical membrane pass occupies residues 60–80; it reads LINGSFEIGNLLLIILVSYFG. Residues 81–86 lie on the Cytoplasmic side of the membrane; the sequence is TKLHRP. The helical transmembrane segment at 87–111 threads the bilayer; it reads IMIGIGCVIMGLGCFLMSLPHFLMG. Topologically, residues 112 to 155 are extracellular; that stretch reads RYEYETTISPTSNLSSNSFLCMENRTQTLKPTQDPAECVKEMKS. N-linked (GlcNAc...) asparagine glycans are attached at residues asparagine 124 and asparagine 135. A helical transmembrane segment spans residues 156–184; it reads LMWIYVLVGNIIRGIGETPIMPLGISYIE. The Cytoplasmic segment spans residues 185–203; the sequence is DFAKSENSPLYIGILESGK. A helical membrane pass occupies residues 204 to 224; it reads MIGPIVGLLLGSFCARIYVDT. At 225 to 242 the chain is on the extracellular side; it reads GSVNTDDLTITPTDTRWV. A helical transmembrane segment spans residues 243–267; sequence GAWWIGFLVCAGVNILTSIPFFFFP. The Cytoplasmic portion of the chain corresponds to 268–311; that stretch reads KTLPKEGLQDNVARTENDKEEKHREKAKEENRGITKDFLPFMKS. The helical transmembrane segment at 312-333 threads the bilayer; sequence LSCNPIYMLLILTSVLQINAFI. The Extracellular segment spans residues 334–353; sequence NMFTFLPKYLEQQYGKSTSE. The chain crosses the membrane as a helical span at residues 354-377; it reads VVLLIGVCNLPPICIGYLLIGFIM. Residues 378–381 lie on the Cytoplasmic side of the membrane; the sequence is KKFR. The chain crosses the membrane as a helical span at residues 382 to 405; that stretch reads ITVKKAAYMAFCLSLFEYLLSYFH. Residues 406 to 513 are Extracellular-facing; that stretch reads FMISCDNFQV…PECANKLQYF (108 aa). The region spanning 433–488 is the Kazal-like domain; that stretch reads NKVLADCNTRCSCLTNTWDPVCGDNGLSYMSACLAGCEKSVGMGTHMVFQNCSCIQ. Disulfide bonds link cysteine 439–cysteine 469, cysteine 445–cysteine 465, and cysteine 454–cysteine 486. Residues asparagine 483 and asparagine 492 are each glycosylated (N-linked (GlcNAc...) asparagine). A helical membrane pass occupies residues 514-536; it reads LIMSVIGSFIYSITAIPGYMVLL. The Cytoplasmic segment spans residues 537–545; that stretch reads RCIKSEEKS. Residues 546–571 form a helical membrane-spanning segment; sequence LGIGLHAFCTRIFAGIPAPIYFGALI. The Extracellular portion of the chain corresponds to 572 to 605; sequence DRTCLHWGTLKCGEPGACRIYNINNFRRIYLVLP. A helical membrane pass occupies residues 606 to 623; sequence AALRGSSYLPAFFILILM. Residues 624-670 are Cytoplasmic-facing; the sequence is RKFQLPGEMYSSETELADMKQTVKKSECTDVHGIPKVENDGELKTKL.

This sequence belongs to the organo anion transporter (TC 2.A.60) family. In terms of tissue distribution, expressed in brain, choroid plexus and lung, but not in liver or kidney.

Its subcellular location is the cell membrane. The protein resides in the basal cell membrane. It carries out the reaction taurocholate(out) = taurocholate(in). The enzyme catalyses glycocholate(out) = glycocholate(in). The catalysed reaction is taurochenodeoxycholate(out) = taurochenodeoxycholate(in). It catalyses the reaction tauroursodeoxycholate(out) = tauroursodeoxycholate(in). It carries out the reaction 3,3',5'-triiodo-L-thyronine(out) = 3,3',5'-triiodo-L-thyronine(in). The enzyme catalyses L-thyroxine(out) = L-thyroxine(in). The catalysed reaction is taurodeoxycholate(out) = taurodeoxycholate(in). It catalyses the reaction glycodeoxycholate(out) = glycodeoxycholate(in). It carries out the reaction glycochenodeoxycholate(out) = glycochenodeoxycholate(in). The enzyme catalyses glycoursodeoxycholate(out) = glycoursodeoxycholate(in). The catalysed reaction is estrone 3-sulfate(out) = estrone 3-sulfate(in). It catalyses the reaction prostaglandin E2(out) = prostaglandin E2(in). It carries out the reaction substance P(out) = substance P(in). Functionally, na(+)-independent transporter that mediates the cellular uptake of a broad range of organic anions such as the endogenous bile salts cholate and deoxycholate, either in their unconjugated or conjugated forms (taurocholate and glycocholate), estrone 3-sulfate and prostaglandin E2, at the plasma membrane. Responsible for intestinal absorption of bile acids. Capable of thyroid hormone transport (both T3 or 3,3',5'-triiodo-L-thyronine, and T4 or L-tyroxine). Plays roles in blood-brain and -cerebrospinal fluid barrier transport of organic anions and signal mediators, and in hormone uptake by neural cells. May also play a role in the reuptake of neuropeptides such as substance P/TAC1 and vasoactive intestinal peptide/VIP released from retinal neurons. Shows a pH-sensitive substrate specificity which may be ascribed to the protonation state of the binding site and leads to a stimulation of substrate transport in an acidic microenvironment. Hydrogencarbonate/HCO3(-) acts as the probable counteranion that exchanges for organic anions. May contribute to regulate the transport of organic compounds in testis across the blood-testis-barrier. The chain is Solute carrier organic anion transporter family member 1A5 (Slco1a5) from Mus musculus (Mouse).